The following is a 345-amino-acid chain: Protein RecA (345 aa).

68-75 (GVESSGKT) lines the ATP pocket.

It belongs to the RecA family.

The protein resides in the cytoplasm. Functionally, can catalyze the hydrolysis of ATP in the presence of single-stranded DNA, the ATP-dependent uptake of single-stranded DNA by duplex DNA, and the ATP-dependent hybridization of homologous single-stranded DNAs. It interacts with LexA causing its activation and leading to its autocatalytic cleavage. The protein is Protein RecA of Aquifex aeolicus (strain VF5).